The sequence spans 366 residues: L-idonate 5-dehydrogenase (366 aa).

7 residues coordinate Zn(2+): Cys56, His81, Cys111, Cys114, Cys117, Cys125, and Glu167.

This sequence belongs to the zinc-containing alcohol dehydrogenase family. Zn(2+) is required as a cofactor.

The catalysed reaction is L-idonate + NAD(+) = 5-dehydro-D-gluconate + NADH + H(+). It functions in the pathway carbohydrate acid metabolism; L-idonate degradation. Its function is as follows. Involved in the catabolism of ascorbate to tartrate. The enzyme has no activity with NADP(+). This chain is L-idonate 5-dehydrogenase, found in Vitis vinifera (Grape).